The following is a 997-amino-acid chain: Autophagy-related protein 9 (997 aa).

Residues 1–318 (MERDEYQLPN…DVYNYYLGNG (318 aa)) are Cytoplasmic-facing. Ser19 is modified (phosphoserine; by ATG1). The segment covering 29–39 (VNPSLNSQEMS) has biased composition (polar residues). The disordered stretch occupies residues 29–88 (VNPSLNSQEMSNFPLPDIERGSSLLHSTNDSREDVDENDLRVPESDQGTSTEEEDEVDEE). Residues 79-88 (TEEEDEVDEE) show a composition bias toward acidic residues. Residues Lys113 and Lys121 each participate in a glycyl lysine isopeptide (Lys-Gly) (interchain with G-Cter in ubiquitin) cross-link. Ser122 carries the post-translational modification Phosphoserine. Disordered regions lie at residues 128–159 (VEGSTDDSVPKVGQLSSEEEEDNEFINNDGFD) and 213–235 (IHHDKDKSANNGPRNINGNQKHG). Residue Lys138 forms a Glycyl lysine isopeptide (Lys-Gly) (interchain with G-Cter in ubiquitin) linkage. 2 positions are modified to phosphoserine: Ser143 and Ser144. Positions 144-159 (SEEEEDNEFINNDGFD) are enriched in acidic residues. A compositionally biased stretch (polar residues) spans 221-233 (ANNGPRNINGNQK). The helical transmembrane segment at 319–339 (FYCIILEKILNICTLLFVVFV) threads the bilayer. The Lumenal segment spans residues 340-376 (STYMGHCVDYSKLPTSHRVSDIIIDKCYSNSITGFTK). The helical transmembrane segment at 377–397 (FFLWMFYFFVILKIVQLYFDV) threads the bilayer. The Cytoplasmic portion of the chain corresponds to 398–538 (QKLSELQNFY…EELQKRFMLA (141 aa)). Residues 539–559 (GFLNIILAPFLVTYFVLLYFF) lie within the membrane without spanning it. Residues 560–620 (RYFNEYKTSP…DQFPKEKTNL (61 aa)) are Cytoplasmic-facing. The helical transmembrane segment at 621-641 (FLKFVSFICGSFVAILAFLTV) threads the bilayer. The Lumenal portion of the chain corresponds to 642 to 656 (FDPENFLNFEITSDR). A Phosphoserine; by ATG1 modification is found at Ser657. Residues 657–677 (SVIFYITILGAIWSVSRNTIT) form a helical membrane-spanning segment. Over 678-723 (QEYHVFDPEETLKELYEYTHYLPKEWEGRYHKEEIKLEFCKLYNLR) the chain is Cytoplasmic. A Glycyl lysine isopeptide (Lys-Gly) (interchain with G-Cter in ubiquitin) cross-link involves residue Lys701. The stretch at 724 to 744 (IVILLRELTSLMITPFVLWFS) is an intramembrane region. The Cytoplasmic portion of the chain corresponds to 745–997 (LPSSAGRIVD…EYYKKSDVGR (253 aa)). Ser787 and Ser792 each carry phosphoserine. Thr794 carries the phosphothreonine modification. Ser802 bears the Phosphoserine; by ATG1 mark. Residue Thr804 is modified to Phosphothreonine; by ATG1. A phosphoserine; by ATG1 mark is found at Ser831 and Ser842. Ser864 is modified (phosphoserine). Residues Ser948 and Ser969 each carry the phosphoserine; by ATG1 modification.

This sequence belongs to the ATG9 family. As to quaternary structure, homotrimer; forms a homotrimer with a central pore that forms a path between the two membrane leaflets. Interacts with ATG23 and ATG27 to form a cycling complex for trafficking to the PAS. Interacts (via N-terminus) with ATG11, required for recruitment of ATG9 to the PAS for the Cvt pathway during nutrient-rich conditions. Interacts (via N-terminus) with ATG17; required for recruitment to the PAS during autophagy and starved conditions. Interacts with ATG2 and ATG18; required for the retrieval of ATG9 from the PAS to the cytoplasmic pool. Interacts with ATG41. Interacts with the conserved oligomeric Golgi (COG) complex subunits COG3 and COG4. Interacts with TRS85. Post-translationally, phosphorylated by ATG1; phosphorylation is required for autophagy and cytoplasm to vacuole transport (Cvt) vesicle formation. Phosphorylation by ATG1 regulates ATG18 interaction and preautophagosome elongation. Phosphorylation at Ser-122 is required for selective autophagy by regulating anterograde trafficking and interaction with ATG23 and ATG27. Phosphorylation at Ser-122 prevents ubiquitination by the SCF(MET30) complex. In terms of processing, ubiquitinated by the SCF(MET30) complex in normal conditions, leading to its degradation by the proteasome, thereby preventing inappropriate induction of autophagy. Ubiquitination by the SCF(MET30) complex is prevented by phosphorylation at Ser-122.

The protein resides in the preautophagosomal structure membrane. The protein localises to the cytoplasmic vesicle membrane. Its subcellular location is the golgi apparatus membrane. It is found in the endoplasmic reticulum membrane. It localises to the mitochondrion membrane. The enzyme catalyses a 1,2-diacyl-sn-glycero-3-phosphocholine(in) = a 1,2-diacyl-sn-glycero-3-phosphocholine(out). The catalysed reaction is a 1,2-diacyl-sn-glycero-3-phospho-L-serine(in) = a 1,2-diacyl-sn-glycero-3-phospho-L-serine(out). It catalyses the reaction a 1,2-diacyl-sn-glycero-3-phosphoethanolamine(in) = a 1,2-diacyl-sn-glycero-3-phosphoethanolamine(out). It carries out the reaction a 1,2-diacyl-sn-glycero-3-phospho-(1D-myo-inositol-3-phosphate)(in) = a 1,2-diacyl-sn-glycero-3-phospho-(1D-myo-inositol-3-phosphate)(out). In terms of biological role, phospholipid scramblase involved in autophagy and cytoplasm to vacuole transport (Cvt) vesicle formation. Cycles between the preautophagosomal structure/phagophore assembly site (PAS) and the cytoplasmic vesicle pool and supplies membrane for the growing autophagosome. Lipid scramblase activity plays a key role in preautophagosomal structure/phagophore assembly by distributing the phospholipids that arrive through ATG2 from the cytoplasmic to the luminal leaflet of the bilayer, thereby driving autophagosomal membrane expansion. Required for mitophagy. Also involved in endoplasmic reticulum-specific autophagic process and is essential for the survival of cells subjected to severe ER stress. Recruits vesicle-tethering proteins TRS85 and YPT1 to the autophagosome formation site. Also recruits ATG23 and ATG8 to the PAS. The sequence is that of Autophagy-related protein 9 from Saccharomyces cerevisiae (strain ATCC 204508 / S288c) (Baker's yeast).